We begin with the raw amino-acid sequence, 243 residues long: Dirigent protein 16 (243 aa).

The N-terminal stretch at 1-24 (MMIKQSPFLLLTTILFTVAVFVAA) is a signal peptide.

The protein belongs to the plant dirigent protein family. Homodimer.

The protein localises to the secreted. It is found in the extracellular space. The protein resides in the apoplast. In terms of biological role, dirigent proteins impart stereoselectivity on the phenoxy radical-coupling reaction, yielding optically active lignans from two molecules of coniferyl alcohol in the biosynthesis of lignans, flavonolignans, and alkaloids and thus plays a central role in plant secondary metabolism. The protein is Dirigent protein 16 (DIR16) of Arabidopsis thaliana (Mouse-ear cress).